Reading from the N-terminus, the 251-residue chain is Pyrroline-5-carboxylate reductase (251 aa).

This sequence belongs to the pyrroline-5-carboxylate reductase family.

The protein resides in the cytoplasm. The catalysed reaction is L-proline + NADP(+) = (S)-1-pyrroline-5-carboxylate + NADPH + 2 H(+). The enzyme catalyses L-proline + NAD(+) = (S)-1-pyrroline-5-carboxylate + NADH + 2 H(+). It participates in amino-acid biosynthesis; L-proline biosynthesis; L-proline from L-glutamate 5-semialdehyde: step 1/1. In terms of biological role, catalyzes the reduction of 1-pyrroline-5-carboxylate (PCA) to L-proline. The chain is Pyrroline-5-carboxylate reductase (proC) from Methanobrevibacter smithii.